A 680-amino-acid polypeptide reads, in one-letter code: Protein terminal ear1 homolog (680 aa).

The RRM domain maps to 223–295 (SLVVLNSLPA…RRLVVEYTRP (73 aa)). Disordered regions lie at residues 294 to 415 (RPSL…SWRG) and 593 to 680 (TEPV…GYTD). Composition is skewed to low complexity over residues 328–340 (PSQSAQPSSSGSG) and 379–403 (SAAAACSTAASASSSTATAPSKQSQ). Residues 404 to 413 (KGGGGRGGSW) show a composition bias toward gly residues. Composition is skewed to low complexity over residues 602–621 (SPAPSSASGASSPPKSCAAS) and 634–648 (SSSGDGASSASSSNA). The segment covering 656–666 (HGETGGDRGDD) has biased composition (basic and acidic residues).

As to expression, highly expressed in shoot apex and inflorescence apex, at intermediate levels in roots and at low levels in leaf blade and leaf sheath.

Probable RNA-binding protein. Involved in the regular timing (plastochron) of lateral organs formation. May regulate the rate of leaf initiation and the duration of vegetative phase. Seems to be redundant to the function of PLASTOCHRON1, but to act in an independent pathway. The protein is Protein terminal ear1 homolog (PLA2) of Oryza sativa subsp. indica (Rice).